The chain runs to 467 residues: Glutamate--tRNA ligase (467 aa).

The 'HIGH' region signature appears at 9–19 (PSPTGFLHIGG). A 'KMSKS' region motif is present at residues 250–254 (KLSKR). Lys-253 is an ATP binding site.

Belongs to the class-I aminoacyl-tRNA synthetase family. Glutamate--tRNA ligase type 1 subfamily. Monomer.

The protein resides in the cytoplasm. It carries out the reaction tRNA(Glu) + L-glutamate + ATP = L-glutamyl-tRNA(Glu) + AMP + diphosphate. In terms of biological role, catalyzes the attachment of glutamate to tRNA(Glu) in a two-step reaction: glutamate is first activated by ATP to form Glu-AMP and then transferred to the acceptor end of tRNA(Glu). This chain is Glutamate--tRNA ligase, found in Mesomycoplasma hyopneumoniae (strain J / ATCC 25934 / NCTC 10110) (Mycoplasma hyopneumoniae).